A 398-amino-acid polypeptide reads, in one-letter code: Probable beta-1,3-galactosyltransferase 5 (398 aa).

Residues L11–T31 form a helical; Signal-anchor for type II membrane protein membrane-spanning segment. Residues N110, N115, and N206 are each glycosylated (N-linked (GlcNAc...) asparagine).

This sequence belongs to the glycosyltransferase 31 family. The cofactor is Mn(2+).

It is found in the golgi apparatus membrane. The protein operates within protein modification; protein glycosylation. In terms of biological role, beta-1,3-galactosyltransferase that transfers galactose from UDP-galactose to substrates with a terminal glycosyl residue. The chain is Probable beta-1,3-galactosyltransferase 5 (B3GALT5) from Arabidopsis thaliana (Mouse-ear cress).